We begin with the raw amino-acid sequence, 156 residues long: Envelope glycoprotein L (156 aa).

A signal peptide spans 1-16; sequence MSPLVAVLVFFSAALG. The gL alphaherpesvirus-type domain occupies 50-156; that stretch reads ELEWDDEDHP…LRYNGGPPAE (107 aa). A disulfide bond links C71 and C95.

Belongs to the herpesviridae glycoprotein L (gL) family. Alphaherpesvirinae gL subfamily. As to quaternary structure, interacts with glycoprotein H (gH); this interaction is necessary for the correct processing and cell surface expression of gH. The heterodimer gH/gL seems to interact with gB trimers during fusion. Post-translationally, O-glycosylated, and sialylated.

It localises to the virion membrane. Its subcellular location is the host cell membrane. It is found in the host Golgi apparatus. The protein resides in the host trans-Golgi network. Functionally, the heterodimer glycoprotein H-glycoprotein L is required for the fusion of viral and plasma membranes leading to virus entry into the host cell. Acts as a functional inhibitor of gH and maintains gH in an inhibited form. Upon binding to host integrins, gL dissociates from gH leading to activation of the viral fusion glycoproteins gB and gH. This chain is Envelope glycoprotein L, found in Suid herpesvirus 1 (strain Indiana-Funkhauser / Becker) (SuHV-1).